Consider the following 131-residue polypeptide: 1,4-dihydroxy-2-naphthoyl-CoA hydrolase (131 aa).

D7 is an active-site residue.

This sequence belongs to the 4-hydroxybenzoyl-CoA thioesterase family. DHNA-CoA hydrolase subfamily.

It carries out the reaction 1,4-dihydroxy-2-naphthoyl-CoA + H2O = 1,4-dihydroxy-2-naphthoate + CoA + H(+). It participates in cofactor biosynthesis; phylloquinone biosynthesis. The protein operates within quinol/quinone metabolism; 1,4-dihydroxy-2-naphthoate biosynthesis; 1,4-dihydroxy-2-naphthoate from chorismate: step 7/7. Functionally, catalyzes the hydrolysis of 1,4-dihydroxy-2-naphthoyl-CoA (DHNA-CoA) to 1,4-dihydroxy-2-naphthoate (DHNA), a reaction involved in phylloquinone (vitamin K1) biosynthesis. The protein is 1,4-dihydroxy-2-naphthoyl-CoA hydrolase of Synechococcus sp. (strain RCC307).